The primary structure comprises 290 residues: MLENVKKSFFRVLCLGALCLGGLMAEQDPKELVGLGAKSYKEKDFTQAKKYFEKACDLKENSGCFNLGVLYYQGQGVEKNLKKAASFYAKACDLNYSNGCHLLGNLYYSGQGVSQNTNKALQYYSKACDLKYAEGCASLGGIYHDGKVVTRDFKKAVEYFTKACDLNDGDGCTILGSLYDAGRGTPKDLKKALASYDKACDLKDSPGCFNAGNMYHHGEGATKNFKEALARYSKACELENGGGCFNLGAMQYNGEGVTRNEKQAIENFKKGCKLGAKGACDILKQLKIKV.

An N-terminal signal peptide occupies residues 1–25; it reads MLENVKKSFFRVLCLGALCLGGLMA. 7 TPR repeats span residues 29–62, 64–98, 100–133, 134–170, 172–205, 206–242, and 244–278; these read PKEL…KENS, CFNL…NYSN, CHLL…LKYA, EGCA…NDGD, CTIL…LKDS, PGCF…ENGG, and CFNL…GAKG. 7 cysteine pairs are disulfide-bonded: Cys56-Cys64, Cys92-Cys100, Cys128-Cys136, Cys164-Cys172, Cys200-Cys208, Cys236-Cys244, and Cys272-Cys280.

It belongs to the hcp beta-lactamase family.

It is found in the secreted. The catalysed reaction is a beta-lactam + H2O = a substituted beta-amino acid. Its function is as follows. May hydrolyze 6-aminopenicillinic acid and 7-aminocephalosporanic acid (ACA) derivatives. The polypeptide is Putative beta-lactamase HcpC (hcpC) (Helicobacter pylori (strain ATCC 700392 / 26695) (Campylobacter pylori)).